Here is a 217-residue protein sequence, read N- to C-terminus: GTP-binding protein Rit2 (217 aa).

GTP is bound by residues 27–34 (GAGGVGKS), 74–78 (DTAGQ), and 133–136 (NKID).

This sequence belongs to the small GTPase superfamily. Ras family. In terms of assembly, interacts with PLXNB3. Interacts with AFDN, the C-terminal domain of RALGDS and RLF, but not with RIN1 and PIK3CA. RLF binds exclusively to the active GTP-bound form. Binds calmodulin. Interacts with POU4F1 (via N-terminus); the interaction controls POU4F1 transactivation activity on some neuronal target genes. As to expression, expressed in ganglion cell layer (GCL), inner plexiform layer (IPL) and inner nuclear layer (INL) of the retina. Expressed in retinal ganglion cells (RGCs). Expressed in horizontal, bipolar and amacrine cells, but not Mueller glia, of the INL (at protein level). Neuron-specific. Expressed in ganglion cell layer (GCL) and inner plexiform layer (IPL).

The protein localises to the nucleus. It is found in the cell membrane. The catalysed reaction is GTP + H2O = GDP + phosphate + H(+). Alternates between an inactive form bound to GDP and an active form bound to GTP. In terms of biological role, binds and exchanges GTP and GDP. Binds and modulates the activation of POU4F1 as gene expression regulator. The protein is GTP-binding protein Rit2 (Rit2) of Mus musculus (Mouse).